The primary structure comprises 306 residues: Non-specific ribonucleoside hydrolase RihC (306 aa).

The active site involves His235.

Belongs to the IUNH family. RihC subfamily.

Hydrolyzes both purine and pyrimidine ribonucleosides with a broad-substrate specificity. The polypeptide is Non-specific ribonucleoside hydrolase RihC (Salmonella heidelberg (strain SL476)).